The sequence spans 614 residues: uncharacterized protein (614 aa).

This is an uncharacterized protein from Lactococcus lactis subsp. cremoris (strain MG1363).